Consider the following 180-residue polypeptide: CASP-like protein 2A3 (180 aa).

Over 1 to 13 the chain is Cytoplasmic; sequence MELIYGSTMRKKW. A helical transmembrane segment spans residues 14 to 34; the sequence is IEPALRFLPVGLCISALALML. Residues 35 to 55 lie on the Extracellular side of the membrane; that stretch reads KSKEGNENGILEYKHVGAFRY. A helical membrane pass occupies residues 56–76; it reads LAYANGICAAYSVLSTFNSVV. The Cytoplasmic segment spans residues 77 to 85; that stretch reads PRSCSLSRA. A helical transmembrane segment spans residues 86 to 106; that stretch reads WFVFVFDQAFTYLMLGAGAVV. Residues 107 to 135 are Extracellular-facing; sequence TEVLYLAYKGDEKITWFEICPYYGRFCNR. A helical transmembrane segment spans residues 136–156; that stretch reads VAASLVISFLALLCFIPLSLI. The Cytoplasmic segment spans residues 157 to 180; that stretch reads SAYRVFSKYDPPSLCKKDQITSQS.

It belongs to the Casparian strip membrane proteins (CASP) family. In terms of assembly, homodimer and heterodimers.

Its subcellular location is the cell membrane. This chain is CASP-like protein 2A3, found in Picea sitchensis (Sitka spruce).